The primary structure comprises 421 residues: Cytochrome c biogenesis protein Ccs1 (421 aa).

Transmembrane regions (helical) follow at residues 12-32, 71-91, and 157-177; these read LRFA…GTVI, TWWF…CTIL, and IAPI…IFGA.

It belongs to the Ccs1/CcsB family. In terms of assembly, may interact with CcsA.

It localises to the plastid. The protein localises to the chloroplast thylakoid membrane. Required during biogenesis of c-type cytochromes (cytochrome c6 and cytochrome f) at the step of heme attachment. The protein is Cytochrome c biogenesis protein Ccs1 of Trieres chinensis (Marine centric diatom).